Reading from the N-terminus, the 104-residue chain is MAAKIRKGDKVIVLTGRDKGRTGEVFEVRPDAGTALVRGINLVKRHQKQTQNQEGGIITKEAPINLSNVAYVGKDGKPTRIGFKIQADGKKVRVAKSSGVEIDG.

The protein belongs to the universal ribosomal protein uL24 family. Part of the 50S ribosomal subunit.

Its function is as follows. One of two assembly initiator proteins, it binds directly to the 5'-end of the 23S rRNA, where it nucleates assembly of the 50S subunit. Functionally, one of the proteins that surrounds the polypeptide exit tunnel on the outside of the subunit. This chain is Large ribosomal subunit protein uL24, found in Bradyrhizobium sp. (strain ORS 278).